The following is a 103-amino-acid chain: Large ribosomal subunit protein bL21 (103 aa).

This sequence belongs to the bacterial ribosomal protein bL21 family. In terms of assembly, part of the 50S ribosomal subunit. Contacts protein L20.

In terms of biological role, this protein binds to 23S rRNA in the presence of protein L20. The protein is Large ribosomal subunit protein bL21 of Laribacter hongkongensis (strain HLHK9).